Reading from the N-terminus, the 284-residue chain is Homeobox protein SMOX-5 (284 aa).

The segment at residues 37 to 96 (RRKTRTTFSNCQLNELENNFNRQRYLTPTDRDRIAKHLGLTNTQVITWFQNRRAKLKREA) is a DNA-binding region (homeobox). A disordered region spans residues 117-172 (LSLSDHDHEETQIDDENEQGDNNNDDDGDDNDVEEDDGEEQEKNHTKYLTQPPSIS). Positions 128–156 (QIDDENEQGDNNNDDDGDDNDVEEDDGEE) are enriched in acidic residues.

The protein localises to the nucleus. This Schistosoma mansoni (Blood fluke) protein is Homeobox protein SMOX-5 (SMOX-5).